A 610-amino-acid polypeptide reads, in one-letter code: Glutamine--fructose-6-phosphate aminotransferase [isomerizing] (610 aa).

Catalysis depends on C2, which acts as the Nucleophile; for GATase activity. The Glutamine amidotransferase type-2 domain occupies 2–219 (CGIVGYAGKK…SGEWGYFSQN (218 aa)). SIS domains follow at residues 287 to 431 (SKDV…SDEE) and 459 to 600 (MSSH…PDQP). K605 serves as the catalytic For Fru-6P isomerization activity.

Homodimer.

It localises to the cytoplasm. The catalysed reaction is D-fructose 6-phosphate + L-glutamine = D-glucosamine 6-phosphate + L-glutamate. Catalyzes the first step in hexosamine metabolism, converting fructose-6P into glucosamine-6P using glutamine as a nitrogen source. In Leptospira interrogans serogroup Icterohaemorrhagiae serovar copenhageni (strain Fiocruz L1-130), this protein is Glutamine--fructose-6-phosphate aminotransferase [isomerizing].